A 370-amino-acid polypeptide reads, in one-letter code: Histidinol-phosphate aminotransferase 1 (370 aa).

Position 222 is an N6-(pyridoxal phosphate)lysine (K222).

It belongs to the class-II pyridoxal-phosphate-dependent aminotransferase family. Histidinol-phosphate aminotransferase subfamily. Homodimer. Pyridoxal 5'-phosphate serves as cofactor.

The catalysed reaction is L-histidinol phosphate + 2-oxoglutarate = 3-(imidazol-4-yl)-2-oxopropyl phosphate + L-glutamate. Its pathway is amino-acid biosynthesis; L-histidine biosynthesis; L-histidine from 5-phospho-alpha-D-ribose 1-diphosphate: step 7/9. This is Histidinol-phosphate aminotransferase 1 from Bacillus thuringiensis subsp. konkukian (strain 97-27).